We begin with the raw amino-acid sequence, 2346 residues long: Nucleoprotein TPR (2346 aa).

4 coiled-coil regions span residues 38–190 (DEYC…HKEI), 217–366 (QLQS…NLES), 395–493 (YAKS…SRQV), and 565–596 (KMLL…NNTV). The tract at residues 622-649 (VDLDDSNLEPNDSALDTSEQPAANFEES) is disordered. Positions 629–642 (LEPNDSALDTSEQP) are enriched in polar residues. Coiled coils occupy residues 643–1158 (AANF…IEAL) and 1196–1247 (EEGR…DELN). The segment at 1187–1655 (LNASGLTAAE…SPRTANVKPM (469 aa)) is interacts with Mad1. Residues Thr-1259, Thr-1302, Thr-1338, and Thr-1390 each carry the phosphothreonine modification. Coiled-coil stretches lie at residues 1281–1536 (TDSN…KRTE) and 1579–1627 (SYDE…GSQQ). Composition is skewed to polar residues over residues 1621-1649 (RQLG…SPRT) and 1657-1667 (GSATVQQSATV). 3 disordered regions span residues 1621–1677 (RQLG…ETPL), 1695–1768 (PTSQ…YMPS), and 1821–2346 (SPRV…GRFP). Residues 1702–1722 (AGSSTSTSSSSSSSSTSTTSA) show a composition bias toward low complexity. Over residues 1738 to 1747 (PQQQVHTTGS) the composition is skewed to polar residues. Low complexity-rich tracts occupy residues 1752-1761 (SMASSSPTSS) and 1827-1878 (SSSS…PSSS). Positions 1879-1891 (NVTTTQAGCSSQG) are enriched in polar residues. Residues 1953–2023 (QEDDIQVVDS…QDNNEVDIEV (71 aa)) show a composition bias toward acidic residues. The segment covering 2028-2080 (MQAQEESQSLDNQAIATASASTQENNQSQAITSGSGESSNPVTLPQAEASNWK) has biased composition (polar residues). Positions 2082–2091 (AAASTSTAAA) are enriched in low complexity. Polar residues-rich tracts occupy residues 2097–2110 (SVEI…SNFC) and 2142–2159 (GAAS…GESS). Positions 2165-2184 (KAADDGGDHADGTDNAREAD) are enriched in basic and acidic residues. Composition is skewed to polar residues over residues 2193–2223 (ATGQ…NQAN) and 2302–2322 (RDTS…NRFA). A compositionally biased stretch (basic residues) spans 2323–2332 (QRTRNRRPIR).

It belongs to the TPR family. As to quaternary structure, part of the nuclear pore complex (NPC). Associates with male-specific lethal (MSL) histone acetyltransferase complex. Interacts with Mad2; the interaction is required for efficient recruitment of Mad2 to unattached kinetochore and occurs in a microtubule-independent manner. Interacts with Mad1 (N-terminus). Interacts with Chro, east and Asator; the interaction is part of a macromolecular complex forming the spindle matrix during mitosis. Interacts with Nup98. In males, interacts with histone acetyltransferase mof. Mps1-mediated phosphorylation disrupts interaction with Mad1 during mitosis. Expressed in salivary glands, fat body, tracheal tube, esophageal tube and anterior ejaculatory duct (at protein level).

It localises to the nucleus. It is found in the nucleus matrix. Its subcellular location is the nucleus lamina. The protein resides in the nucleus envelope. The protein localises to the nucleus membrane. It localises to the nuclear pore complex. It is found in the cytoplasm. Its subcellular location is the cytoskeleton. The protein resides in the spindle. The protein localises to the chromosome. It localises to the centromere. It is found in the kinetochore. Its subcellular location is the midbody. Its function is as follows. Component of the nuclear pore complex (NPC), a complex required for the trafficking across the nuclear envelope. Functions as a scaffolding element in the nuclear phase of the NPC. Plays a role in chromosomal organization and gene expression regulation; stimulates transcription by promoting the formation of an open chromatin environment. Binds chromatin to nucleoporin-associated regions (NARs) that define transcriptionally active regions of the genome. Associates with extended chromosomal regions that alternate between domains of high density binding with those of low occupancy. Preferentially binds to NARs of the male X chromosome. In males, together with Nup153, required for the localization of the male-specific lethal (MSL) histone acetyltransferase complex to the X chromosome and therefore for the transcription of dosage compensation genes. In males, restrains dosage-compensated expression at the level of nascent transcription probably by interacting with the MSL complex and by modulating RNA Polymerase II phosphorylation status and activity. During mitosis forms a gel-like spindle matrix complex together with Skeletor (Skel), Chro, east, and Asator embedding the microtubule spindle apparatus. During interphase localizes Mad1 to the nuclear pore complex and thereby might act as a scaffold to assemble the Mad1-C-Mad2 complex, a heterotetramer that catalyzes the structural conversion of open-Mad2 (O-Mad2) into closed-Mad2 (C-Mad2) which is essential for spindle-assembly checkpoint (SAC). During the metaphase-anaphase transition and before chromosome congression, is phosphorylated by Msp-1; this modification releases Mad1 from the nuclear pore complex and thereby promotes assembly of SAC ensuring a timely and effective recruitment of spindle checkpoint proteins like Mad1, Mad2 and Mps1 to unattached kinetochores (KT). In testes, has a role in stem cell asymmetric division and maintenance via regulation of mitotic spindle assembly checkpoint (SAC) complex. The chain is Nucleoprotein TPR from Drosophila melanogaster (Fruit fly).